A 460-amino-acid polypeptide reads, in one-letter code: Serine--tRNA ligase (460 aa).

Residue 242–244 coordinates L-serine; the sequence is TAE. ATP is bound by residues 273 to 275 and Val289; that span reads RRE. Residue Glu296 participates in L-serine binding. Position 369 to 372 (369 to 372) interacts with ATP; sequence EVSS. Ser405 is a binding site for L-serine.

It belongs to the class-II aminoacyl-tRNA synthetase family. Type-1 seryl-tRNA synthetase subfamily. As to quaternary structure, homodimer. The tRNA molecule binds across the dimer.

It is found in the cytoplasm. The enzyme catalyses tRNA(Ser) + L-serine + ATP = L-seryl-tRNA(Ser) + AMP + diphosphate + H(+). It carries out the reaction tRNA(Sec) + L-serine + ATP = L-seryl-tRNA(Sec) + AMP + diphosphate + H(+). It functions in the pathway aminoacyl-tRNA biosynthesis; selenocysteinyl-tRNA(Sec) biosynthesis; L-seryl-tRNA(Sec) from L-serine and tRNA(Sec): step 1/1. Functionally, catalyzes the attachment of serine to tRNA(Ser). Is also able to aminoacylate tRNA(Sec) with serine, to form the misacylated tRNA L-seryl-tRNA(Sec), which will be further converted into selenocysteinyl-tRNA(Sec). This chain is Serine--tRNA ligase, found in Haloquadratum walsbyi (strain DSM 16790 / HBSQ001).